The sequence spans 145 residues: Flagellar assembly factor FliW (145 aa).

The protein belongs to the FliW family. In terms of assembly, interacts with translational regulator CsrA and flagellin(s).

The protein resides in the cytoplasm. Acts as an anti-CsrA protein, binds CsrA and prevents it from repressing translation of its target genes, one of which is flagellin. Binds to flagellin and participates in the assembly of the flagellum. The protein is Flagellar assembly factor FliW of Clostridium tetani (strain Massachusetts / E88).